The chain runs to 313 residues: Ribosomal RNA small subunit methyltransferase H (313 aa).

Residues 35–37 (GGH), Asp55, Phe81, Asp103, and Gln110 each bind S-adenosyl-L-methionine.

It belongs to the methyltransferase superfamily. RsmH family.

The protein localises to the cytoplasm. It carries out the reaction cytidine(1402) in 16S rRNA + S-adenosyl-L-methionine = N(4)-methylcytidine(1402) in 16S rRNA + S-adenosyl-L-homocysteine + H(+). Functionally, specifically methylates the N4 position of cytidine in position 1402 (C1402) of 16S rRNA. The polypeptide is Ribosomal RNA small subunit methyltransferase H (Pseudomonas aeruginosa (strain ATCC 15692 / DSM 22644 / CIP 104116 / JCM 14847 / LMG 12228 / 1C / PRS 101 / PAO1)).